Reading from the N-terminus, the 602-residue chain is MSRLKRIAGQDLRAGFKAGGRDCGTSVPQGLLKAARKSGQLNLSGRNLSEVPQCVWRINVDIPEEANQNLSFGATERWWEQTDLTKLIISNNKLQSLTDDLRLLPALTVLDIHDNQLTSLPSAIRELENLQKLNVSHNKLKILPEEITNLRNLKCLYLQHNELTCISEGFEQLSNLEDLDLSNNHLTTVPASFSSLSSLVRLNLSSNELKSLPAEINRMKRLKHLDCNSNLLETIPPELAGMESLELLYLRRNKLRFLPEFPSCSLLKELHVGENQIEMLEAEHLKHLNSILVLDLRDNKLKSVPDEIILLRSLERLDLSNNDISSLPYSLGNLHLKFLALEGNPLRTIRREIISKGTQEVLKYLRSKIKDDGPSQSESATETAMTLPSESRVNIHAIITLKILDYSDKQATLIPDEVFDAVKSNIVTSINFSKNQLCEIPKRMVELKEMVSDVDLSFNKLSFISLELCVLQKLTFLDLRNNFLNSLPEEMESLVRLQTINLSFNRFKMLPEVLYRIFTLETILISNNQVGSVDPQKMKMMENLTTLDLQNNDLLQIPPELGNCVNLRTLLLDGNPFRVPRAAILMKGTAAILEYLRDRIPT.

A Phosphoserine modification is found at serine 71. 20 LRR repeats span residues 83–104 (DLTK…LRLL), 106–127 (ALTV…IREL), 129–150 (NLQK…ITNL), 152–173 (NLKC…FEQL), 175–196 (NLED…FSSL), 198–219 (SLVR…INRM), 221–242 (RLKH…LAGM), 244–265 (SLEL…PSCS), 266–286 (LLKE…EHLK), 290–311 (SILV…IILL), 313–335 (SLER…GNLH), 336–356 (LKFL…IISK), 400–421 (TLKI…VFDA), 426–447 (IVTS…MVEL), 450–472 (MVSD…CVLQ), 473–494 (KLTF…MESL), 496–517 (RLQT…LYRI), 519–540 (TLET…KMKM), 543–564 (NLTT…LGNC), and 566–586 (NLRT…AILM).

This Homo sapiens (Human) protein is Leucine-rich repeat-containing protein 40 (LRRC40).